The primary structure comprises 724 residues: Propionyl-CoA carboxylase alpha chain, mitochondrial (724 aa).

A Biotin carboxylation domain is found at 48-495; sequence KFDKILIANR…TTKYLPEVYP (448 aa). ATP is bound by residues K163, 195–256, E247, and N282; that span reads SRDI…PRHI. An ATP-grasp domain is found at 167 to 364; the sequence is KKIATAARVS…IVQQMLRVSY (198 aa). Mg(2+) is bound by residues E322, E335, and N337. Residues E322, E335, and N337 each contribute to the Mn(2+) site. Residue R339 is part of the active site. F395 contributes to the biotin binding site. Residues 649 to 724 enclose the Biotinyl-binding domain; sequence KAKVDLSTVV…DEGEVLVELE (76 aa). An N6-biotinyllysine modification is found at K690.

In terms of assembly, the holoenzyme is a dodecamer composed of 6 alpha subunits and 6 beta subunits. Interacts with sir-2.2 and sir-2.3. The cofactor is biotin. It depends on Mg(2+) as a cofactor. Mn(2+) is required as a cofactor. Post-translationally, the biotin cofactor is covalently attached to the C-terminal biotinyl-binding domain and is required for the catalytic activity.

The protein resides in the mitochondrion matrix. The catalysed reaction is propanoyl-CoA + hydrogencarbonate + ATP = (S)-methylmalonyl-CoA + ADP + phosphate + H(+). It catalyses the reaction butanoyl-CoA + hydrogencarbonate + ATP = (2S)-ethylmalonyl-CoA + ADP + phosphate + H(+). It participates in metabolic intermediate metabolism; propanoyl-CoA degradation; succinyl-CoA from propanoyl-CoA: step 1/3. Functionally, this is one of the 2 subunits of the biotin-dependent propionyl-CoA carboxylase (PCC), a mitochondrial enzyme involved in the catabolism of odd chain fatty acids, branched-chain amino acids isoleucine, threonine, methionine, and valine and other metabolites. Propionyl-CoA carboxylase catalyzes the carboxylation of propionyl-CoA/propanoyl-CoA to D-methylmalonyl-CoA/(S)-methylmalonyl-CoA. Within the holoenzyme, the alpha subunit catalyzes the ATP-dependent carboxylation of the biotin carried by the biotin carboxyl carrier (BCC) domain, while the beta subunit then transfers the carboxyl group from carboxylated biotin to propionyl-CoA. Propionyl-CoA carboxylase also significantly acts on butyryl-CoA/butanoyl-CoA, which is converted to ethylmalonyl-CoA/(2S)-ethylmalonyl-CoA. Other alternative minor substrates include (2E)-butenoyl-CoA/crotonoyl-CoA. This is Propionyl-CoA carboxylase alpha chain, mitochondrial (pcca-1) from Caenorhabditis elegans.